We begin with the raw amino-acid sequence, 510 residues long: Thermostable carboxypeptidase 1 (510 aa).

The region spanning 3–506 (PEAAYQNLLE…FLAYLEKKYA (504 aa)) is the Peptidase M32 domain. The HPF signature appears at 245–247 (HPF). The short motif at 255-259 (DVRIT) is the DXRXT element. Histidine 276 is a binding site for Zn(2+). The HEXXH motif lies at 276–280 (HEMGH). Residue glutamate 277 is the Proton donor/acceptor of the active site. Zn(2+) contacts are provided by histidine 280 and glutamate 306. The HES/GQ signature appears at 305 to 308 (HESQ). An I/NRXXA/SD motif is present at residues 357–362 (IRVEAD). Positions 412-419 (GVMQDVHW) match the GXXQDXHW motif.

Belongs to the peptidase M32 family. As to quaternary structure, homodimer. Zn(2+) is required as a cofactor.

It catalyses the reaction Release of a C-terminal amino acid with broad specificity, except for -Pro.. Its function is as follows. Broad specificity carboxypetidase that releases amino acids sequentially from the C-terminus, including neutral, aromatic, polar and basic residues, but not Pro. Has lower activity with substrates ending with Gly or Glu. The polypeptide is Thermostable carboxypeptidase 1 (Thermus thermophilus (strain ATCC 27634 / DSM 579 / HB8)).